The chain runs to 526 residues: Choline/ethanolamine transporter FLVCR2 (526 aa).

A disordered region spans residues 1–70 (MVNEGPNQEE…PSGLAHPSSS (70 aa)). The Cytoplasmic segment spans residues 1-76 (MVNEGPNQEE…PSSSGPEDLS (76 aa)). Heme b is bound at residue 1 to 84 (MVNEGPNQEE…LSVIKVSRRR (84 aa)). 5 consecutive repeat copies span residues 25 to 30 (PSVSVH), 31 to 36 (PSVSVH), 37 to 42 (PSVSIN), 43 to 48 (PSVSVH), and 49 to 54 (PSSSAH). Residues 25-56 (PSVSVHPSVSVHPSVSINPSVSVHPSSSAHPS) show a composition bias toward low complexity. An 8 X 6 AA tandem repeats of P-S-[VS]-S-[VIAG]-[HNP] region spans residues 25–72 (PSVSVHPSVSVHPSVSINPSVSVHPSSSAHPSALAQPSGLAHPSSSGP). The stretch at 55 to 60 (PSALAQ) is one 6; approximate repeat. A 7; approximate repeat occupies 61–66 (PSGLAH). Repeat 8 spans residues 67 to 72 (PSSSGP). A helical membrane pass occupies residues 77–101 (VIKVSRRRWAVVLVFSCYSMCNSFQ). Choline is bound by residues asparagine 98 and tryptophan 102. The Extracellular portion of the chain corresponds to 102–119 (WIQYGSINNIFMHFYGVS). The chain crosses the membrane as a helical span at residues 120-147 (AFAIDWLSMCYMLTYIPLLLPVAWLLEK). At 148–149 (FG) the chain is on the cytoplasmic side. Residues 150–169 (LRTIALTGSALNCLGAWVKL) traverse the membrane as a helical segment. The Extracellular portion of the chain corresponds to 170–176 (GSLKPHL). The chain crosses the membrane as a helical span at residues 177–205 (FPVTVVGQLICSVAQVFILGMPSRIASVW). Positions 191 and 195 each coordinate choline. The Cytoplasmic portion of the chain corresponds to 206 to 210 (FGANE). A helical membrane pass occupies residues 211–236 (VSTACSVAVFGNQLGIAIGFLVPPVL). The Extracellular segment spans residues 237–241 (VPNIE). Residues 242 to 271 (DRDELAYHISIMFYIIGGVATLLLILVIIV) form a helical membrane-spanning segment. At 272-307 (FKEKPKYPPSRAQSLSYALTSPDASYLGSIARLFKN) the chain is on the cytoplasmic side. The helical transmembrane segment at 308 to 338 (LNFVLLVITYGLNAGAFYALSTLLNRMVIWH) threads the bilayer. A choline-binding site is contributed by tyrosine 325. Topologically, residues 339–342 (YPGE) are extracellular. The chain crosses the membrane as a helical span at residues 343–371 (EVNAGRIGLTIVIAGMLGAVISGIWLDRS). Residues 372–373 (KT) are Cytoplasmic-facing. A helical membrane pass occupies residues 374 to 396 (YKETTLVVYIMTLVGMVVYTFTL). The Extracellular portion of the chain corresponds to 397–399 (NLG). The helical transmembrane segment at 400–429 (HLWVVFITAGTMGFFMTGYLPLGFEFAVEL) threads the bilayer. Topologically, residues 430-437 (TYPESEGI) are cytoplasmic. Residues 438–463 (SSGLLNISAQVFGIIFTISQGQIIDN) form a helical membrane-spanning segment. A choline-binding site is contributed by glutamine 447. Over 464–465 (YG) the chain is Extracellular. A helical transmembrane segment spans residues 466-488 (TKPGNIFLCVFLTLGAALTAFIK). At 489–526 (ADLRRQKANKETLENKLQEEEEESNTSKVPTAVSEDHL) the chain is on the cytoplasmic side. Residues 500–526 (TLENKLQEEEEESNTSKVPTAVSEDHL) form a disordered region. At serine 515 the chain carries Phosphoserine.

It belongs to the major facilitator superfamily. Feline leukemia virus subgroup C receptor (TC 2.A.1.28.1) family. In terms of assembly, interacts with components of electron transfer chain complexes III, IV and V including CYC1, NDUFA4, COX4I1, ATP5PD and ATP5F1C; these interactions occur in the absence of heme and are disrupted upon heme binding. Interacts with ATP2A2; this interaction occurs in the absence of heme and promotes ATP2A2 proteasomal degradation; the complex is dissociated upon heme binding. Interacts with HMOX1; this interaction is potentiated in the presence of heme. As to expression, expressed in non-hematopoietic tissues, with relative abundant expression in brain, placenta, lung, liver and kidney. Also expressed in hematopoietic tissues (fetal liver, spleen, lymph node, thymus, leukocytes and bone marrow). Found in acidophil cells of the pituitary that secrete growth hormone and prolactin (at protein level).

It localises to the cell membrane. It is found in the mitochondrion membrane. The protein resides in the endoplasmic reticulum membrane. It carries out the reaction choline(out) = choline(in). It catalyses the reaction ethanolamine(in) = ethanolamine(out). The catalysed reaction is heme b(in) = heme b(out). In terms of biological role, choline uniporter that specifically mediates choline uptake at the blood-brain-barrier. Responsible for the majority of choline uptake across the blood-brain-barrier from the circulation into the brain. Choline, a nutrient critical for brain development, is a precursor of phosphatidylcholine, as well as betaine. Also mediates transport of ethanolamine. Choline and ethanolamine transport is not coupled with proton transport and is exclusively driven by the choline gradient across the plasma membrane. However, the presence of an inwardly directed proton gradient enhances choline uptake. Also acts as a heme b transporter. Required to regulate mitochondrial respiration processes, ATP synthesis and thermogenesis. At low heme levels, interacts with components of electron transfer chain (ETC) complexes and ATP2A2, leading to ubiquitin-mediated degradation of ATP2A2 and inhibition of thermogenesis. Upon heme binding, dissociates from ETC complexes to allow switching from mitochondrial ATP synthesis to thermogenesis. In Homo sapiens (Human), this protein is Choline/ethanolamine transporter FLVCR2.